The sequence spans 407 residues: tRNA (uracil(54)-C(5))-methyltransferase (407 aa).

The [4Fe-4S] cluster site is built by Cys61, Cys67, Cys70, and Cys137. S-adenosyl-L-methionine-binding positions include Gln253, Tyr279, Thr284, 300-301 (DS), Asp327, and Asp341. The active-site Nucleophile is Cys368. Catalysis depends on Glu400, which acts as the Proton acceptor.

Belongs to the class I-like SAM-binding methyltransferase superfamily. RNA M5U methyltransferase family.

It carries out the reaction uridine(54) in tRNA + S-adenosyl-L-methionine = 5-methyluridine(54) in tRNA + S-adenosyl-L-homocysteine + H(+). Its function is as follows. Catalyzes the formation of 5-methyl-uridine at position 54 (m5U54) in tRNA. The sequence is that of tRNA (uracil(54)-C(5))-methyltransferase from Pyrococcus horikoshii (strain ATCC 700860 / DSM 12428 / JCM 9974 / NBRC 100139 / OT-3).